Reading from the N-terminus, the 2340-residue chain is Proto-oncogene tyrosine-protein kinase ROS (2340 aa).

The N-terminal stretch at 1–28 is a signal peptide; the sequence is MKNICWLTLKLVKFVVLGCIIWISVAQS. Over 29 to 1854 the chain is Extracellular; it reads TVLSSCLTSC…EDGVWITETS (1826 aa). Asparagine 53 carries N-linked (GlcNAc...) asparagine glycosylation. Fibronectin type-III domains lie at 111 to 206 and 207 to 295; these read LPTA…VPET and APLI…PSPS. N-linked (GlcNAc...) asparagine glycans are attached at residues asparagine 334 and asparagine 362. In terms of domain architecture, Fibronectin type-III 3 spans 567–667; that stretch reads LPGHPQEVSV…APSVGTTLVP (101 aa). 2 N-linked (GlcNAc...) asparagine glycosylation sites follow: asparagine 935 and asparagine 1011. Fibronectin type-III domains follow at residues 943 to 1038 and 1039 to 1146; these read IPDP…SVPS and APEN…TSEI. A glycan (N-linked (GlcNAc...) asparagine) is linked at asparagine 1243. Fibronectin type-III domains lie at 1442 to 1549, 1550 to 1649, 1651 to 1744, and 1745 to 1846; these read ASDM…TKSG, VPGA…VNMF, TPEK…TKAG, and VPSK…LVED. A glycan (N-linked (GlcNAc...) asparagine) is linked at asparagine 1676. A helical transmembrane segment spans residues 1855 to 1875; sequence FILTIIVGIFLVATVPLTFVW. Topologically, residues 1876–2340 are cytoplasmic; the sequence is HRSLKSHKAS…AHSEHGDVSE (465 aa). The Protein kinase domain maps to 1938-2216; it reads LSLRLLLGSG…QLQLFRNVFL (279 aa). Residues 1944–1952 and lysine 1973 each bind ATP; that span reads LGSGAFGEV. Aspartate 2072 (proton acceptor) is an active-site residue. A phosphotyrosine; by autocatalysis mark is found at tyrosine 2267 and tyrosine 2327.

Belongs to the protein kinase superfamily. Tyr protein kinase family. Insulin receptor subfamily. Interacts with PTPN11; may activate the PI3 kinase-mTOR signaling pathway. Interacts with VAV3; constitutive interaction mediating VAV3 phosphorylation. Interacts with PTPN6 (via SH2 1 domain); the interaction is direct and promotes ROS1 dephosphorylation. Phosphorylated. Probably autophosphorylates. Phosphorylation at Tyr-2267 and/or Tyr-2327 recruits PTPN11. Phosphorylation at Tyr-2267 is required for the interaction with PTPN6 that mediates ROS1 dephosphorylation. Phosphorylation at Tyr-2267 stimulates the kinase activity and the activation of the ERK1 signaling cascade. As to expression, expressed by epithelial cells of the caput epididymis (at protein level).

The protein localises to the cell membrane. The catalysed reaction is L-tyrosyl-[protein] + ATP = O-phospho-L-tyrosyl-[protein] + ADP + H(+). Inhibited by dephosphorylation by PTPN6. Receptor tyrosine kinase (RTK) that plays a role in epithelial cell differentiation and regionalization of the proximal epididymal epithelium. NELL2 is an endogenous ligand for ROS1. Upon endogenous stimulation by NELL2, ROS1 activates the intracellular signaling pathway and triggers epididymal epithelial differentiation and subsequent sperm maturation. May activate several downstream signaling pathways related to cell differentiation, proliferation, growth and survival including the PI3 kinase-mTOR signaling pathway. Mediates the phosphorylation of PTPN11, an activator of this pathway. May also phosphorylate and activate the transcription factor STAT3 to control anchorage-independent cell growth. Mediates the phosphorylation and the activation of VAV3, a guanine nucleotide exchange factor regulating cell morphology. May activate other downstream signaling proteins including AKT1, MAPK1, MAPK3, IRS1, and PLCG2. This Mus musculus (Mouse) protein is Proto-oncogene tyrosine-protein kinase ROS (Ros1).